A 412-amino-acid polypeptide reads, in one-letter code: Cytochrome p450 CYP199A2 (412 aa).

Residues 94-97 (RPPS) and S247 contribute to the substrate site. C361 serves as a coordination point for heme.

This sequence belongs to the cytochrome P450 family. In terms of assembly, interacts with the ferredoxin-like iron-sulfur protein ThcC. Requires heme as cofactor.

The protein localises to the cytoplasm. It carries out the reaction 4-methoxybenzoate + AH2 + O2 = 4-hydroxybenzoate + formaldehyde + A + H2O. Functionally, the oxidative demethylation of 4-methoxybenzoate requires the participation of the monooxygenase CYP199A2, the ferredoxin-like protein ThcC/RPA1872 and a ferredoxin reductase to mediate the transfer of electrons from NADH to CYP199A2. It is also active with 4-ethylbenzoate. The protein is Cytochrome p450 CYP199A2 of Rhodopseudomonas palustris (strain ATCC BAA-98 / CGA009).